We begin with the raw amino-acid sequence, 96 residues long: Non-specific lipid-transfer protein 2 (96 aa).

The signal sequence occupies residues 1–27 (MMRKLAVLVLAVAMVAACGGGVVGVAG). Cystine bridges form between C30–C62, C38–C52, C53–C88, and C64–C95.

Its function is as follows. Transfer lipids across membranes. May play a role in plant defense or in the biosynthesis of cuticle layers. This chain is Non-specific lipid-transfer protein 2 (LTP-2), found in Oryza sativa subsp. japonica (Rice).